Here is an 82-residue protein sequence, read N- to C-terminus: Small ribosomal subunit protein bS16 (82 aa).

It belongs to the bacterial ribosomal protein bS16 family.

The protein is Small ribosomal subunit protein bS16 of Natranaerobius thermophilus (strain ATCC BAA-1301 / DSM 18059 / JW/NM-WN-LF).